The primary structure comprises 4262 residues: Polyketide synthase PksM (4262 aa).

The tract at residues 1 to 114 is N-terminal hotdog fold 1; that stretch reads MITEQLHISL…ADMHRKEQTA (114 aa). The 271-residue stretch at 1 to 271 folds into the PKS/mFAS DH 1 domain; it reads MITEQLHISL…GKSVRNMSAF (271 aa). Histidine 18 serves as the catalytic Proton acceptor; for dehydratase activity 1. The C-terminal hotdog fold 1 stretch occupies residues 129 to 271; the sequence is DRILNLDEIY…GKSVRNMSAF (143 aa). Residue aspartate 190 is the Proton donor; for dehydratase activity 1 of the active site. The Carrier 1 domain occupies 293 to 367; that stretch reads PAFEMYLRQL…ELAAHLADHY (75 aa). At serine 327 the chain carries O-(pantetheine 4'-phosphoryl)serine. A Ketosynthase family 3 (KS3) 1 domain is found at 393–831; that stretch reads GEDIAIIGMA…GSNAHLILEE (439 aa). Catalysis depends on for beta-ketoacyl synthase 1 activity residues cysteine 569, histidine 704, and histidine 744. The N-terminal hotdog fold 2 stretch occupies residues 1009–1135; it reads HPLVHRNTSD…GRAVISDEAE (127 aa). Positions 1009-1301 constitute a PKS/mFAS DH 2 domain; the sequence is HPLVHRNTSD…MRALDGEQHS (293 aa). Histidine 1038 (proton acceptor; for dehydratase activity 2) is an active-site residue. Residues 1149–1301 form a C-terminal hotdog fold 2 region; that stretch reads SLDTVTSEQC…MRALDGEQHS (153 aa). Residue aspartate 1211 is the Proton donor; for dehydratase activity 2 of the active site. Positions 2188–2261 constitute a Carrier 2 domain; it reads EKSTEYMKKL…ALVEHFIKTK (74 aa). Serine 2222 is subject to O-(pantetheine 4'-phosphoryl)serine. Polar residues predominate over residues 2275–2291; the sequence is VQQHTPAESRTQSSQKP. The segment at 2275-2313 is disordered; it reads VQQHTPAESRTQSSQKPDQAAKRTRRFRKLGFSGEKETP. The Ketosynthase family 3 (KS3) 2 domain maps to 2319–2734; the sequence is SRDVAVIGIS…GSNAHIILEE (416 aa). Catalysis depends on for beta-ketoacyl synthase 2 activity residues cysteine 2476, histidine 2611, and histidine 2651. Residues 2750–2826 are a coiled coil; the sequence is ALIVLSAKNM…DFIENKADSL (77 aa). The Carrier 3 domain maps to 3409–3486; the sequence is SIEKRLEHDL…ELISFFLTDH (78 aa). Serine 3446 carries the post-translational modification O-(pantetheine 4'-phosphoryl)serine. In terms of domain architecture, Ketosynthase family 3 (KS3) 3 spans 3529–3944; sequence DEPIAIIGMS…GTNAHAVIEE (416 aa). Residues cysteine 3690, histidine 3825, and histidine 3865 each act as for beta-ketoacyl synthase 3 activity in the active site. Residues 4004-4033 are a coiled coil; sequence KAMEARLAIVANNQEQLVRKLKEYVEAMKN. The Carrier 4 domain maps to 4135 to 4212; it reads NGKTHIQKII…ALSDHLALKA (78 aa). Position 4172 is an O-(pantetheine 4'-phosphoryl)serine (serine 4172).

Requires pantetheine 4'-phosphate as cofactor.

It localises to the cytoplasm. The protein operates within antibiotic biosynthesis; bacillaene biosynthesis. In terms of biological role, involved in some intermediate steps for the synthesis of the antibiotic polyketide bacillaene which is involved in secondary metabolism. The sequence is that of Polyketide synthase PksM (pksM) from Bacillus subtilis (strain 168).